A 93-amino-acid polypeptide reads, in one-letter code: UPF0473 protein YrzB (93 aa).

It belongs to the UPF0473 family.

In Bacillus subtilis (strain 168), this protein is UPF0473 protein YrzB (yrzB).